Consider the following 71-residue polypeptide: Long neurotoxin 1 (71 aa).

Intrachain disulfides connect cysteine 3/cysteine 21, cysteine 14/cysteine 42, cysteine 27/cysteine 31, cysteine 46/cysteine 57, and cysteine 58/cysteine 63.

It belongs to the three-finger toxin family. Long-chain subfamily. Type II alpha-neurotoxin sub-subfamily. In terms of tissue distribution, expressed by the venom gland.

The protein resides in the secreted. In terms of biological role, binds with high affinity to muscular (alpha-1/CHRNA1) and neuronal (alpha-7/CHRNA7) nicotinic acetylcholine receptor (nAChR) and inhibits acetylcholine from binding to the receptor, thereby impairing neuromuscular and neuronal transmission. The polypeptide is Long neurotoxin 1 (Naja melanoleuca (Forest cobra)).